The following is a 632-amino-acid chain: Biosynthetic arginine decarboxylase (632 aa).

Residue Lys101 is modified to N6-(pyridoxal phosphate)lysine. 281-291 (FDVGGGLGVDY) is a substrate binding site.

Belongs to the Orn/Lys/Arg decarboxylase class-II family. SpeA subfamily. The cofactor is Mg(2+). It depends on pyridoxal 5'-phosphate as a cofactor.

It catalyses the reaction L-arginine + H(+) = agmatine + CO2. It participates in amine and polyamine biosynthesis; agmatine biosynthesis; agmatine from L-arginine: step 1/1. Catalyzes the biosynthesis of agmatine from arginine. The chain is Biosynthetic arginine decarboxylase from Salmonella dublin (strain CT_02021853).